Here is a 579-residue protein sequence, read N- to C-terminus: DNA ligase 1 (579 aa).

Residue glutamate 244 participates in ATP binding. Lysine 246 (N6-AMP-lysine intermediate) is an active-site residue. ATP contacts are provided by arginine 251, arginine 266, glutamate 296, phenylalanine 342, arginine 419, and lysine 425.

This sequence belongs to the ATP-dependent DNA ligase family. Mg(2+) is required as a cofactor.

It catalyses the reaction ATP + (deoxyribonucleotide)n-3'-hydroxyl + 5'-phospho-(deoxyribonucleotide)m = (deoxyribonucleotide)n+m + AMP + diphosphate.. In terms of biological role, DNA ligase that seals nicks in double-stranded DNA during DNA replication, DNA recombination and DNA repair. This chain is DNA ligase 1, found in Methanosarcina mazei (strain ATCC BAA-159 / DSM 3647 / Goe1 / Go1 / JCM 11833 / OCM 88) (Methanosarcina frisia).